The chain runs to 216 residues: Large ribosomal subunit protein uL4 (216 aa).

The tract at residues Thr-47–Leu-77 is disordered.

Belongs to the universal ribosomal protein uL4 family. In terms of assembly, part of the 50S ribosomal subunit.

Functionally, one of the primary rRNA binding proteins, this protein initially binds near the 5'-end of the 23S rRNA. It is important during the early stages of 50S assembly. It makes multiple contacts with different domains of the 23S rRNA in the assembled 50S subunit and ribosome. Forms part of the polypeptide exit tunnel. This chain is Large ribosomal subunit protein uL4, found in Acidiphilium cryptum (strain JF-5).